The sequence spans 426 residues: Isocitrate dehydrogenase [NADP] (426 aa).

5 residues coordinate D-threo-isocitrate: Ser-123, Asn-125, Arg-129, Arg-139, and Arg-162. Residue Asp-312 participates in Mg(2+) binding. NADP(+)-binding positions include 344 to 350 (HGTAWDI), Asn-357, and Lys-404.

The protein belongs to the isocitrate and isopropylmalate dehydrogenases family. In terms of assembly, homodimer. The cofactor is Mg(2+). Mn(2+) is required as a cofactor.

It carries out the reaction D-threo-isocitrate + NADP(+) = 2-oxoglutarate + CO2 + NADPH. Functionally, catalyzes the oxidative decarboxylation of isocitrate to 2-oxoglutarate and carbon dioxide with the concomitant reduction of NADP(+). The protein is Isocitrate dehydrogenase [NADP] (icd) of Aquifex aeolicus (strain VF5).